A 451-amino-acid chain; its full sequence is DNA double-strand break repair protein Mre11 (451 aa).

Mn(2+) is bound by residues Asp-8, His-10, Asp-49, and Asn-84. His-85 functions as the Proton donor in the catalytic mechanism. The Mn(2+) site is built by His-168, His-198, and His-200. The segment at 374–451 is disordered; the sequence is REDNPPDLGD…GRPSLDRWIG (78 aa). The span at 396–416 shows a compositional bias: acidic residues; sequence GSEESSEEPEESDGEEVGLEV.

This sequence belongs to the MRE11/RAD32 family. As to quaternary structure, homodimer. Forms a heterotetramer composed of two Mre11 subunits and two Rad50 subunits. Requires Mn(2+) as cofactor.

Its activity is regulated as follows. Nuclease activity is regulated by Rad50. Its function is as follows. Part of the Rad50/Mre11 complex, which is involved in the early steps of DNA double-strand break (DSB) repair. The complex may facilitate opening of the processed DNA ends to aid in the recruitment of HerA and NurA. Mre11 binds to DSB ends and has both double-stranded 3'-5' exonuclease activity and single-stranded endonuclease activity. The protein is DNA double-strand break repair protein Mre11 of Methanopyrus kandleri (strain AV19 / DSM 6324 / JCM 9639 / NBRC 100938).